Consider the following 157-residue polypeptide: Phosphopantetheine adenylyltransferase (157 aa).

A substrate-binding site is contributed by Ser-8. ATP contacts are provided by residues 8–9 (SF) and His-16. Positions 40, 72, and 86 each coordinate substrate. ATP is bound by residues 87-89 (GLR), Glu-97, and 122-128 (HSFLSSS).

Belongs to the bacterial CoaD family. In terms of assembly, homohexamer. Requires Mg(2+) as cofactor.

Its subcellular location is the cytoplasm. The enzyme catalyses (R)-4'-phosphopantetheine + ATP + H(+) = 3'-dephospho-CoA + diphosphate. It functions in the pathway cofactor biosynthesis; coenzyme A biosynthesis; CoA from (R)-pantothenate: step 4/5. In terms of biological role, reversibly transfers an adenylyl group from ATP to 4'-phosphopantetheine, yielding dephospho-CoA (dPCoA) and pyrophosphate. The sequence is that of Phosphopantetheine adenylyltransferase from Prochlorococcus marinus (strain MIT 9313).